The sequence spans 242 residues: Large ribosomal subunit protein uL2 (242 aa).

The interval 201–242 is disordered; the sequence is VDHPFGGGRHQHTGKPTTVSRKKVPPGRKVGHISARRTGVRK. Over residues 220–242 the composition is skewed to basic residues; that stretch reads SRKKVPPGRKVGHISARRTGVRK.

Belongs to the universal ribosomal protein uL2 family. In terms of assembly, part of the 50S ribosomal subunit. Forms a bridge to the 30S subunit in the 70S ribosome.

In terms of biological role, one of the primary rRNA binding proteins. Required for association of the 30S and 50S subunits to form the 70S ribosome, for tRNA binding and peptide bond formation. It has been suggested to have peptidyltransferase activity; this is somewhat controversial. Makes several contacts with the 16S rRNA in the 70S ribosome. The chain is Large ribosomal subunit protein uL2 from Methanocaldococcus jannaschii (strain ATCC 43067 / DSM 2661 / JAL-1 / JCM 10045 / NBRC 100440) (Methanococcus jannaschii).